A 2101-amino-acid polypeptide reads, in one-letter code: General transcription factor 3C polypeptide 1 (2101 aa).

The segment covering 473–487 has biased composition (acidic residues); sequence GEEAFLSDSESEEES. Disordered regions lie at residues 473–574 and 588–609; these read GEEA…MDSH and NPKE…DKPH. Over residues 492-503 the composition is skewed to basic residues; sequence GKRRGRGSRGHA. The segment covering 504-513 has biased composition (low complexity); it reads RASGDAGSGS. Lysine 534 participates in a covalent cross-link: Glycyl lysine isopeptide (Lys-Gly) (interchain with G-Cter in SUMO2). Phosphoserine is present on serine 667. 2 disordered regions span residues 718 to 772 and 820 to 864; these read STAN…EKMG and GEQP…SSWE. Positions 747-759 are enriched in polar residues; it reads RSANSDPNTSSKP. Basic and acidic residues-rich tracts occupy residues 760–771 and 826–836; these read ESTRVKKTDEKM and HSERKTGKQES. Glycyl lysine isopeptide (Lys-Gly) (interchain with G-Cter in SUMO2) cross-links involve residues lysine 770 and lysine 833. Position 1063 is a phosphoserine (serine 1063). Residues 1186–1196 are compositionally biased toward basic and acidic residues; that stretch reads EEQFELDREPT. Disordered stretches follow at residues 1186–1239, 1598–1627, and 1822–1923; these read EEQF…KKLR, KSLG…QGVE, and DTKA…QENQ. Threonine 1196 bears the Phosphothreonine mark. Positions 1199-1215 are enriched in basic residues; it reads RNRKVRGGKSQKRKRLK. A compositionally biased stretch (basic and acidic residues) spans 1229 to 1239; that stretch reads EHPEAKSKKLR. Acidic residues predominate over residues 1606-1617; sequence LDDDEEEEDLDE. Basic and acidic residues predominate over residues 1822 to 1831; it reads DTKASGDDSQ. A phosphoserine mark is found at serine 1854 and serine 1890. The span at 1900-1910 shows a compositional bias: low complexity; the sequence is EAQAPAQLAAP.

It belongs to the TFIIIC subunit 1 family. As to quaternary structure, part of the TFIIIC subcomplex TFIIIC2, consisting of six subunits, GTF3C1, GTF3C2, GTF3C3, GTF3C4, GTF3C5 and GTF3C6. Interacts with IGHMBP2. Interacts with MAF1.

It localises to the nucleus. Required for RNA polymerase III-mediated transcription. Component of TFIIIC that initiates transcription complex assembly on tRNA and is required for transcription of 5S rRNA and other stable nuclear and cytoplasmic RNAs. Binds to the box B promoter element. The sequence is that of General transcription factor 3C polypeptide 1 (Gtf3c1) from Mus musculus (Mouse).